Here is a 181-residue protein sequence, read N- to C-terminus: ATP-dependent protease subunit HslV (181 aa).

Threonine 7 is a catalytic residue. Glycine 166, cysteine 169, and threonine 172 together coordinate Na(+).

It belongs to the peptidase T1B family. HslV subfamily. A double ring-shaped homohexamer of HslV is capped on each side by a ring-shaped HslU homohexamer. The assembly of the HslU/HslV complex is dependent on binding of ATP.

The protein resides in the cytoplasm. It carries out the reaction ATP-dependent cleavage of peptide bonds with broad specificity.. Allosterically activated by HslU binding. Functionally, protease subunit of a proteasome-like degradation complex believed to be a general protein degrading machinery. This is ATP-dependent protease subunit HslV from Acidovorax ebreus (strain TPSY) (Diaphorobacter sp. (strain TPSY)).